A 428-amino-acid chain; its full sequence is Cyclic AMP-responsive element-binding protein 3-like protein 3-A (428 aa).

Topologically, residues methionine 1–glutamine 286 are cytoplasmic. Positions valine 67 to serine 83 are enriched in low complexity. The segment at valine 67 to proline 104 is disordered. The segment covering serine 93–glutamate 103 has biased composition (pro residues). Residues isoleucine 210–leucine 273 form the bZIP domain. The segment at lysine 212–arginine 241 is basic motif. The segment at leucine 252–leucine 273 is leucine-zipper. The helical; Signal-anchor for type II membrane protein transmembrane segment at alanine 287 to leucine 303 threads the bilayer. The Lumenal segment spans residues proline 304–methionine 428. Residues threonine 381–methionine 428 form a disordered region. Residues proline 385–aspartate 402 show a composition bias toward basic and acidic residues. An N-linked (GlcNAc...) asparagine glycan is attached at asparagine 389.

It belongs to the bZIP family. ATF subfamily. Binds DNA as a dimer. Controlled by regulated intramembrane proteolysis (RIP). A fragment containing the cytoplasmic transcription factor domain is released by proteolysis. The cleavage seems to be performed sequentially by site-1 and site-2 proteases.

The protein localises to the endoplasmic reticulum membrane. It is found in the nucleus. Transcriptional activator. Binds the cAMP response element (CRE). Activates transcription through box-B element and CRE. Seems to function synergistically with atf6. Regulates FGF21 transcription. The sequence is that of Cyclic AMP-responsive element-binding protein 3-like protein 3-A (creb3l3a) from Danio rerio (Zebrafish).